A 312-amino-acid chain; its full sequence is Porphobilinogen deaminase (312 aa).

Residue Cys-241 is modified to S-(dipyrrolylmethanemethyl)cysteine.

This sequence belongs to the HMBS family. Monomer. Dipyrromethane is required as a cofactor.

The catalysed reaction is 4 porphobilinogen + H2O = hydroxymethylbilane + 4 NH4(+). Its pathway is porphyrin-containing compound metabolism; protoporphyrin-IX biosynthesis; coproporphyrinogen-III from 5-aminolevulinate: step 2/4. It participates in porphyrin-containing compound metabolism; chlorophyll biosynthesis. Its function is as follows. Tetrapolymerization of the monopyrrole PBG into the hydroxymethylbilane pre-uroporphyrinogen in several discrete steps. This is Porphobilinogen deaminase (hemC) from Chlorobaculum parvum (strain DSM 263 / NCIMB 8327) (Chlorobium vibrioforme subsp. thiosulfatophilum).